A 218-amino-acid chain; its full sequence is Ribose-5-phosphate isomerase A (218 aa).

Substrate is bound by residues 28–31, 81–84, and 94–97; these read TGST, DGAD, and KGGG. Glu-103 functions as the Proton acceptor in the catalytic mechanism. Lys-121 contributes to the substrate binding site.

Belongs to the ribose 5-phosphate isomerase family. As to quaternary structure, homodimer.

It catalyses the reaction aldehydo-D-ribose 5-phosphate = D-ribulose 5-phosphate. It functions in the pathway carbohydrate degradation; pentose phosphate pathway; D-ribose 5-phosphate from D-ribulose 5-phosphate (non-oxidative stage): step 1/1. In terms of biological role, catalyzes the reversible conversion of ribose-5-phosphate to ribulose 5-phosphate. In Methylococcus capsulatus (strain ATCC 33009 / NCIMB 11132 / Bath), this protein is Ribose-5-phosphate isomerase A.